Reading from the N-terminus, the 361-residue chain is tRNA 2-selenouridine synthase (361 aa).

The region spanning 11–134 is the Rhodanese domain; that stretch reads ALLERPLIDV…MRQCVNAEIE (124 aa). Cys94 functions as the S-selanylcysteine intermediate in the catalytic mechanism.

Belongs to the SelU family. Monomer.

The enzyme catalyses 5-methylaminomethyl-2-thiouridine(34) in tRNA + selenophosphate + (2E)-geranyl diphosphate + H2O + H(+) = 5-methylaminomethyl-2-selenouridine(34) in tRNA + (2E)-thiogeraniol + phosphate + diphosphate. It catalyses the reaction 5-methylaminomethyl-2-thiouridine(34) in tRNA + (2E)-geranyl diphosphate = 5-methylaminomethyl-S-(2E)-geranyl-thiouridine(34) in tRNA + diphosphate. The catalysed reaction is 5-methylaminomethyl-S-(2E)-geranyl-thiouridine(34) in tRNA + selenophosphate + H(+) = 5-methylaminomethyl-2-(Se-phospho)selenouridine(34) in tRNA + (2E)-thiogeraniol. It carries out the reaction 5-methylaminomethyl-2-(Se-phospho)selenouridine(34) in tRNA + H2O = 5-methylaminomethyl-2-selenouridine(34) in tRNA + phosphate. Its function is as follows. Involved in the post-transcriptional modification of the uridine at the wobble position (U34) of tRNA(Lys), tRNA(Glu) and tRNA(Gln). Catalyzes the conversion of 2-thiouridine (S2U-RNA) to 2-selenouridine (Se2U-RNA). Acts in a two-step process involving geranylation of 2-thiouridine (S2U) to S-geranyl-2-thiouridine (geS2U) and subsequent selenation of the latter derivative to 2-selenouridine (Se2U) in the tRNA chain. This Chromohalobacter salexigens (strain ATCC BAA-138 / DSM 3043 / CIP 106854 / NCIMB 13768 / 1H11) protein is tRNA 2-selenouridine synthase.